Here is a 368-residue protein sequence, read N- to C-terminus: Glutamate 5-kinase 1 (368 aa).

An ATP-binding site is contributed by lysine 12. Residues serine 52, aspartate 135, and asparagine 147 each contribute to the substrate site. Residues 167-168 (SD) and 209-215 (TGGMKTK) each bind ATP. A PUA domain is found at 274 to 348 (QGEVVVDGSF…DNEQSEFSEK (75 aa)).

This sequence belongs to the glutamate 5-kinase family.

The protein resides in the cytoplasm. It catalyses the reaction L-glutamate + ATP = L-glutamyl 5-phosphate + ADP. The protein operates within amino-acid biosynthesis; L-proline biosynthesis; L-glutamate 5-semialdehyde from L-glutamate: step 1/2. Catalyzes the transfer of a phosphate group to glutamate to form L-glutamate 5-phosphate. In Pseudoalteromonas translucida (strain TAC 125), this protein is Glutamate 5-kinase 1.